Consider the following 154-residue polypeptide: Urease accessory protein UreE (154 aa).

Belongs to the UreE family.

Its subcellular location is the cytoplasm. Its function is as follows. Involved in urease metallocenter assembly. Binds nickel. Probably functions as a nickel donor during metallocenter assembly. This is Urease accessory protein UreE from Escherichia coli O157:H7.